A 228-amino-acid chain; its full sequence is Cytochrome b5 domain-containing protein 1 (228 aa).

Positions Arg-17 to His-83 constitute a Cytochrome b5 heme-binding domain. His-83 lines the heme pocket.

The protein belongs to the cytochrome b5 family.

Its subcellular location is the cytoplasm. The protein localises to the cytoskeleton. It is found in the cilium axoneme. Radial spoke stalk protein that binds heme under oxidizing conditions. Required for the coordinated beating of multiple cilia maybe by functioning in a redox signaling pathway. This is Cytochrome b5 domain-containing protein 1 (Cyb5d1) from Mus musculus (Mouse).